Consider the following 84-residue polypeptide: MVVIRLARGGSKKRPFFNIVATDSRNRRDGRFIERVGFYNPLASEGEEGLRVVADRLAYWQGVGAQLSPTVARLVKQNAAKAAA.

The protein belongs to the bacterial ribosomal protein bS16 family.

In Cupriavidus pinatubonensis (strain JMP 134 / LMG 1197) (Cupriavidus necator (strain JMP 134)), this protein is Small ribosomal subunit protein bS16.